The primary structure comprises 131 residues: MEFLSKIVRVHIPDYLNSVPVPDSFGGFLDLTAGQWLHLFAFSGTVAAAVYMSVKPYLDKKDQKDQLVNLRIQKESSKVVNMVDIEDLGNKVCYCRCWRSKKFPLCDGSHAKHNEDTGDNVGPLVLKRKDV.

The Lumenal portion of the chain corresponds to 1–35 (MEFLSKIVRVHIPDYLNSVPVPDSFGGFLDLTAGQ). A helical transmembrane segment spans residues 36–58 (WLHLFAFSGTVAAAVYMSVKPYL). The Cytoplasmic segment spans residues 59 to 131 (DKKDQKDQLV…GPLVLKRKDV (73 aa)). The [2Fe-2S] cluster site is built by Cys95, Cys97, Cys106, and His110.

This sequence belongs to the CISD protein family. CISD2 subfamily. The cofactor is [2Fe-2S] cluster.

The protein localises to the endoplasmic reticulum membrane. The sequence is that of CDGSH iron-sulfur domain-containing protein 2 homolog A from Branchiostoma floridae (Florida lancelet).